We begin with the raw amino-acid sequence, 312 residues long: 4-diphosphocytidyl-2-C-methyl-D-erythritol kinase (312 aa).

Lys16 is a catalytic residue. 101-111 (PIGAGLAGGSS) contacts ATP. Asp143 is an active-site residue.

Belongs to the GHMP kinase family. IspE subfamily.

It carries out the reaction 4-CDP-2-C-methyl-D-erythritol + ATP = 4-CDP-2-C-methyl-D-erythritol 2-phosphate + ADP + H(+). The protein operates within isoprenoid biosynthesis; isopentenyl diphosphate biosynthesis via DXP pathway; isopentenyl diphosphate from 1-deoxy-D-xylulose 5-phosphate: step 3/6. Functionally, catalyzes the phosphorylation of the position 2 hydroxy group of 4-diphosphocytidyl-2C-methyl-D-erythritol. This chain is 4-diphosphocytidyl-2-C-methyl-D-erythritol kinase, found in Prochlorococcus marinus (strain MIT 9515).